Here is a 296-residue protein sequence, read N- to C-terminus: Phosphatidylglycerol--prolipoprotein diacylglyceryl transferase (296 aa).

4 consecutive transmembrane segments (helical) span residues 10 to 30 (IAFS…LAAF), 57 to 77 (LLFY…MLFY), 92 to 112 (VWEG…ACWL), and 119 to 139 (LHFF…LGFG). Arginine 140 provides a ligand contact to a 1,2-diacyl-sn-glycero-3-phospho-(1'-sn-glycerol). The next 3 helical transmembrane spans lie at 194 to 214 (QLYE…TFSM), 220 to 240 (YAVS…VEFV), and 254 to 274 (WLTM…VLLA).

Belongs to the Lgt family.

It localises to the cell inner membrane. The catalysed reaction is L-cysteinyl-[prolipoprotein] + a 1,2-diacyl-sn-glycero-3-phospho-(1'-sn-glycerol) = an S-1,2-diacyl-sn-glyceryl-L-cysteinyl-[prolipoprotein] + sn-glycerol 1-phosphate + H(+). Its pathway is protein modification; lipoprotein biosynthesis (diacylglyceryl transfer). Catalyzes the transfer of the diacylglyceryl group from phosphatidylglycerol to the sulfhydryl group of the N-terminal cysteine of a prolipoprotein, the first step in the formation of mature lipoproteins. The protein is Phosphatidylglycerol--prolipoprotein diacylglyceryl transferase of Xanthomonas euvesicatoria pv. vesicatoria (strain 85-10) (Xanthomonas campestris pv. vesicatoria).